A 604-amino-acid chain; its full sequence is Terpenoid synthase 30 (604 aa).

Mg(2+) is bound by residues Asn-356, Asp-360, Asn-500, Thr-504, and Glu-508. The short motif at Asn-356–Asp-360 is the DDXXD motif; degenerate element.

It belongs to the terpene synthase family. Tpsa subfamily. The cofactor is Mg(2+). Mn(2+) is required as a cofactor.

It localises to the cytoplasm. Its pathway is secondary metabolite biosynthesis; terpenoid biosynthesis. Its function is as follows. Involved in terpene biosynthesis in roots. Possesses sesquiterpene (C15) synthase activity and diterpene (C20) synthase activity in vitro. This Arabidopsis thaliana (Mouse-ear cress) protein is Terpenoid synthase 30.